A 202-amino-acid polypeptide reads, in one-letter code: Dephospho-CoA kinase (202 aa).

The DPCK domain maps to 3–200 (TIGLTGGIGS…QRYLTLAANR (198 aa)). 11–16 (GSGKSA) provides a ligand contact to ATP.

This sequence belongs to the CoaE family.

Its subcellular location is the cytoplasm. It catalyses the reaction 3'-dephospho-CoA + ATP = ADP + CoA + H(+). It functions in the pathway cofactor biosynthesis; coenzyme A biosynthesis; CoA from (R)-pantothenate: step 5/5. In terms of biological role, catalyzes the phosphorylation of the 3'-hydroxyl group of dephosphocoenzyme A to form coenzyme A. This chain is Dephospho-CoA kinase, found in Thiobacillus denitrificans (strain ATCC 25259 / T1).